Here is a 162-residue protein sequence, read N- to C-terminus: Caveolin-2 (162 aa).

Over 1 to 86 (MGLETEKADV…FEISKYVLYK (86 aa)) the chain is Cytoplasmic. The residue at position 19 (Tyr19) is a Phosphotyrosine; by SRC. Phosphoserine is present on residues Ser20 and Ser23. The segment at residues 87 to 107 (FLTVFLAIPLAFAAGVLFAVL) is an intramembrane region (helical). Topologically, residues 108–162 (SCLHIWILMPFVKTCLMVLPSVQTIWRSVTDVVIAPLCASIGRSFSSVGLQLSHD) are cytoplasmic.

The protein belongs to the caveolin family. In terms of assembly, monomer or homodimer. Interacts with CAV1; the interaction forms a stable heterooligomeric complex that is required for targeting to lipid rafts and for caveolae formation. Tyrosine phosphorylated forms do not form heterooligomers with the Tyr-19-phosphorylated form existing as a monomer or dimer. Interacts (tyrosine phosphorylated form) with the SH2 domain-containing proteins, RASA1, NCK1 and SRC. Interacts (tyrosine phosphorylated form) with INSR. Interacts (Tyr-19 phosphorylated form) with MAPK1 (phosphorylated form); the interaction, promoted by insulin, leads to nuclear location and MAPK1 activation. Interacts with STAT3; the interaction is increased on insulin-induced tyrosine phosphorylation leading to STAT activation. Phosphorylated on serine and tyrosine residues. CAV1 promotes phosphorylation on Ser-23 which then targets the complex to the plasma membrane, lipid rafts and caveolae. Phosphorylation on Tyr-19 is required for insulin-induced phosphorylation of MAPK1 and DNA binding of STAT3. Tyrosine phosphorylation is induced by both EGF and insulin.

The protein localises to the nucleus. Its subcellular location is the cytoplasm. It localises to the golgi apparatus membrane. The protein resides in the cell membrane. It is found in the membrane. The protein localises to the caveola. May act as a scaffolding protein within caveolar membranes. Interacts directly with G-protein alpha subunits and can functionally regulate their activity. Acts as an accessory protein in conjunction with CAV1 in targeting to lipid rafts and driving caveolae formation. Positive regulator of cellular mitogenesis of the MAPK signaling pathway. Required for the insulin-stimulated nuclear translocation and activation of MAPK1 and STAT3, and the subsequent regulation of cell cycle progression. This Oryctolagus cuniculus (Rabbit) protein is Caveolin-2 (CAV2).